The sequence spans 431 residues: Enolase (431 aa).

Q162 is a binding site for (2R)-2-phosphoglycerate. Catalysis depends on E204, which acts as the Proton donor. 3 residues coordinate Mg(2+): D241, E284, and D311. (2R)-2-phosphoglycerate is bound by residues K336, R365, S366, and K387. K336 serves as the catalytic Proton acceptor.

It belongs to the enolase family. It depends on Mg(2+) as a cofactor.

It localises to the cytoplasm. Its subcellular location is the secreted. It is found in the cell surface. The enzyme catalyses (2R)-2-phosphoglycerate = phosphoenolpyruvate + H2O. It functions in the pathway carbohydrate degradation; glycolysis; pyruvate from D-glyceraldehyde 3-phosphate: step 4/5. In terms of biological role, catalyzes the reversible conversion of 2-phosphoglycerate (2-PG) into phosphoenolpyruvate (PEP). It is essential for the degradation of carbohydrates via glycolysis. This is Enolase from Sorangium cellulosum (strain So ce56) (Polyangium cellulosum (strain So ce56)).